Consider the following 336-residue polypeptide: Porphobilinogen deaminase (336 aa).

At Cys-251 the chain carries S-(dipyrrolylmethanemethyl)cysteine. Ser-327 and Ser-329 each carry phosphoserine.

This sequence belongs to the HMBS family. Requires dipyrromethane as cofactor.

The enzyme catalyses 4 porphobilinogen + H2O = hydroxymethylbilane + 4 NH4(+). Its pathway is porphyrin-containing compound metabolism; protoporphyrin-IX biosynthesis; coproporphyrinogen-III from 5-aminolevulinate: step 2/4. In terms of biological role, tetrapolymerization of the monopyrrole PBG into the hydroxymethylbilane pre-uroporphyrinogen in several discrete steps. The polypeptide is Porphobilinogen deaminase (hem3) (Schizosaccharomyces pombe (strain 972 / ATCC 24843) (Fission yeast)).